Consider the following 315-residue polypeptide: DNA-directed RNA polymerase subunit alpha (315 aa).

The tract at residues 1-228 (MAQFQIECVE…DLFNPLKDIS (228 aa)) is alpha N-terminal domain (alpha-NTD). Positions 243-315 (TAQIPIEELQ…LPQERSSKHN (73 aa)) are alpha C-terminal domain (alpha-CTD).

The protein belongs to the RNA polymerase alpha chain family. In terms of assembly, homodimer. In cyanobacteria the RNAP catalytic core is composed of 2 alpha, 1 beta, 1 beta', 1 gamma and 1 omega subunit. When a sigma factor is associated with the core the holoenzyme is formed, which can initiate transcription.

It catalyses the reaction RNA(n) + a ribonucleoside 5'-triphosphate = RNA(n+1) + diphosphate. Functionally, DNA-dependent RNA polymerase catalyzes the transcription of DNA into RNA using the four ribonucleoside triphosphates as substrates. The sequence is that of DNA-directed RNA polymerase subunit alpha from Nostoc sp. (strain PCC 7120 / SAG 25.82 / UTEX 2576).